The following is a 480-amino-acid chain: Ribosome assembly protein rrb1 (480 aa).

2 disordered regions span residues 1-78 (MSKR…WLPG) and 155-176 (QHDE…ILEH). Acidic residues-rich tracts occupy residues 28 to 52 (VDTE…YIEA) and 158 to 172 (ENDD…EEDP). Residues S163 and S166 each carry the phosphoserine modification. WD repeat units follow at residues 183–225 (GACN…RSLD), 289–329 (SHTA…KTSA), 334–375 (AHPG…SSSS), 385–425 (WHRA…DEEE), and 446–480 (MGQQ…TITF).

In terms of assembly, associates with ribosomal protein L3.

The protein localises to the cytoplasm. Its subcellular location is the nucleus. It is found in the nucleolus. In terms of biological role, involved in regulation of L3 expression and stability and plays a role in early 60S ribosomal subunit assembly. May be required for proper assembly of pre-ribosomal particles during early ribosome biogenesis, presumably by targeting L3 onto the 35S precursor rRNA. The sequence is that of Ribosome assembly protein rrb1 (rrb1) from Schizosaccharomyces pombe (strain 972 / ATCC 24843) (Fission yeast).